The following is a 486-amino-acid chain: Cysteine--tRNA ligase (486 aa).

Cysteine 29 serves as a coordination point for Zn(2+). Residues 31-41 (ITVYDYCHLGH) carry the 'HIGH' region motif. 3 residues coordinate Zn(2+): cysteine 215, histidine 240, and glutamate 244. Positions 272–276 (KMSKS) match the 'KMSKS' region motif. Residue lysine 275 participates in ATP binding.

Belongs to the class-I aminoacyl-tRNA synthetase family. In terms of assembly, monomer. The cofactor is Zn(2+).

The protein localises to the cytoplasm. The enzyme catalyses tRNA(Cys) + L-cysteine + ATP = L-cysteinyl-tRNA(Cys) + AMP + diphosphate. This is Cysteine--tRNA ligase from Gloeothece citriformis (strain PCC 7424) (Cyanothece sp. (strain PCC 7424)).